We begin with the raw amino-acid sequence, 395 residues long: S-adenosylmethionine synthase (395 aa).

ATP is bound at residue His16. Asp18 provides a ligand contact to Mg(2+). Glu44 serves as a coordination point for K(+). 2 residues coordinate L-methionine: Glu57 and Gln100. The interval 100–110 (QSPDIAQGVDR) is flexible loop. Residues 167–169 (DAK), 233–234 (RF), Asp242, 248–249 (RK), Ala265, and Lys269 contribute to the ATP site. Asp242 contacts L-methionine. Residue Lys273 participates in L-methionine binding.

It belongs to the AdoMet synthase family. In terms of assembly, homotetramer; dimer of dimers. Mg(2+) is required as a cofactor. K(+) serves as cofactor.

The protein localises to the cytoplasm. The enzyme catalyses L-methionine + ATP + H2O = S-adenosyl-L-methionine + phosphate + diphosphate. The protein operates within amino-acid biosynthesis; S-adenosyl-L-methionine biosynthesis; S-adenosyl-L-methionine from L-methionine: step 1/1. Catalyzes the formation of S-adenosylmethionine (AdoMet) from methionine and ATP. The overall synthetic reaction is composed of two sequential steps, AdoMet formation and the subsequent tripolyphosphate hydrolysis which occurs prior to release of AdoMet from the enzyme. This is S-adenosylmethionine synthase from Burkholderia cenocepacia (strain ATCC BAA-245 / DSM 16553 / LMG 16656 / NCTC 13227 / J2315 / CF5610) (Burkholderia cepacia (strain J2315)).